A 341-amino-acid polypeptide reads, in one-letter code: Zinc transporter 6, chloroplastic (341 aa).

A helical membrane pass occupies residues 28–48 (IVAVFAIFLTSVFGVWGPVLL). Topologically, residues 49 to 61 (AKYFHGKPLYDKA) are cytoplasmic. Residues 62 to 82 (ILVIKCFAAGVILSTSLVHVL) traverse the membrane as a helical segment. Topologically, residues 83–102 (PEAFESLADCQVSSRHPWKD) are lumenal. Residues 103 to 123 (FPFAGLVTMIGAITALLVDLT) form a helical membrane-spanning segment. Topologically, residues 124 to 179 (ASEHMGHGGGGGGDGGMEYMPVGKAVGGLEMKEGKCGADLEIQENSEEEIVKMKQR) are cytoplasmic. A helical transmembrane segment spans residues 180–200 (LVSQVLEIGIIFHSVIIGVTM). At 201–211 (GMSQNKCTIRP) the chain is on the lumenal side. A helical membrane pass occupies residues 212–232 (LIAALSFHQIFEGLGLGGCIA). At 233–243 (QAGFKAGTVVY) the chain is on the cytoplasmic side. Residues 244–264 (MCLMFAVTTPLGIVLGMVIFA) form a helical membrane-spanning segment. The Lumenal segment spans residues 265–280 (ATGYDDQNPNALIMEG). A helical membrane pass occupies residues 281-301 (LLGSFSSGILIYMALVDLIAL). Over 302–320 (DFFHNKMLTTCGESGSRLK) the chain is Cytoplasmic. The helical transmembrane segment at 321 to 341 (KLCFVALVLGSASMSLLALWA) threads the bilayer.

This sequence belongs to the ZIP transporter (TC 2.A.5) family.

The protein localises to the plastid. It is found in the chloroplast thylakoid membrane. Functionally, may play a role in the transport of zinc in the plastids. The protein is Zinc transporter 6, chloroplastic (ZIP6) of Arabidopsis thaliana (Mouse-ear cress).